The sequence spans 228 residues: MEDSPLPDLRDIELKLGRKVPESLVRSLRGEEPVPRERDRDPCGGSGGGGGGGGGCSSSSSYCSFPPSLSSSSSSSPTSGSPRGSHSSALERLETKLHLLRQEMVNLRATDVRLMRQLLVINESIESIKWMIEEKATITSRGSSLSGSLCSLLESQSTSLRGSYNSLHDGSDGLDGISVGSYLDTLADDVPGHQTPSDLDQFSDSSLIEDSQALHKRPKLDSEYYCFG.

The residue at position 1 (Met-1) is an N-acetylmethionine. Residues 1–89 (MEDSPLPDLR…GSPRGSHSSA (89 aa)) are disordered. Composition is skewed to basic and acidic residues over residues 8–21 (DLRD…RKVP) and 28–42 (LRGE…DRDP). Positions 44–56 (GGSGGGGGGGGGC) are enriched in gly residues. Positions 57-88 (SSSSSYCSFPPSLSSSSSSSPTSGSPRGSHSS) are enriched in low complexity.

This is Leucine rich adaptor protein 1-like (LURAP1L) from Homo sapiens (Human).